The following is a 152-amino-acid chain: Deoxyuridine 5'-triphosphate nucleotidohydrolase (152 aa).

Substrate contacts are provided by residues 71–73 (RSG), Asn-84, 88–90 (LID), and Met-98.

The protein belongs to the dUTPase family. Homotrimer. The cofactor is Mg(2+).

It carries out the reaction dUTP + H2O = dUMP + diphosphate + H(+). Its pathway is pyrimidine metabolism; dUMP biosynthesis; dUMP from dCTP (dUTP route): step 2/2. Functionally, this enzyme is involved in nucleotide metabolism: it produces dUMP, the immediate precursor of thymidine nucleotides and it decreases the intracellular concentration of dUTP so that uracil cannot be incorporated into DNA. This Escherichia coli O1:K1 / APEC protein is Deoxyuridine 5'-triphosphate nucleotidohydrolase.